The chain runs to 843 residues: Protein P (843 aa).

Residues 1 to 177 (MPLSYQHFRK…FCGSPYSWEQ (177 aa)) are terminal protein domain (TP). A spacer region spans residues 178-346 (ELQHGRLVFQ…YCLSHLINLH (169 aa)). Disordered regions lie at residues 218-243 (LKQSRLGLQPQQGSLARGKSGRSGSI) and 291-315 (TAQRHSPSGHAVEFHSIPPSSAGSQ). Residues 347-690 (EDWGPCIEHG…YLNLYPVARQ (344 aa)) form a polymerase/reverse transcriptase domain (RT) region. Positions 357–600 (EHNIRIPRTP…YSLNFMGYVI (244 aa)) constitute a Reverse transcriptase domain. Mg(2+) is bound by residues Asp429, Asp551, and Asp552.

This sequence belongs to the hepadnaviridae P protein family.

The enzyme catalyses DNA(n) + a 2'-deoxyribonucleoside 5'-triphosphate = DNA(n+1) + diphosphate. The catalysed reaction is Endonucleolytic cleavage to 5'-phosphomonoester.. Activated by host HSP70 and HSP40 in vitro to be able to bind the epsilon loop of the pgRNA. Because deletion of the RNase H region renders the protein partly chaperone-independent, the chaperones may be needed indirectly to relieve occlusion of the RNA-binding site by this domain. Inhibited by several reverse-transcriptase inhibitors: Lamivudine, Adefovir and Entecavir. Its function is as follows. Multifunctional enzyme that converts the viral RNA genome into dsDNA in viral cytoplasmic capsids. This enzyme displays a DNA polymerase activity that can copy either DNA or RNA templates, and a ribonuclease H (RNase H) activity that cleaves the RNA strand of RNA-DNA heteroduplexes in a partially processive 3'- to 5'-endonucleasic mode. Neo-synthesized pregenomic RNA (pgRNA) are encapsidated together with the P protein, and reverse-transcribed inside the nucleocapsid. Initiation of reverse-transcription occurs first by binding the epsilon loop on the pgRNA genome, and is initiated by protein priming, thereby the 5'-end of (-)DNA is covalently linked to P protein. Partial (+)DNA is synthesized from the (-)DNA template and generates the relaxed circular DNA (RC-DNA) genome. After budding and infection, the RC-DNA migrates in the nucleus, and is converted into a plasmid-like covalently closed circular DNA (cccDNA). The activity of P protein does not seem to be necessary for cccDNA generation, and is presumably released from (+)DNA by host nuclear DNA repair machinery. The chain is Protein P from Hepatitis B virus genotype C subtype ayw (isolate Australia/AustRC/1992) (HBV-C).